A 397-amino-acid polypeptide reads, in one-letter code: Leucine carboxyl methyltransferase 1 (397 aa).

Residues 17–61 (AIQTPPPTDPNAAPAHRPAPRPALGRCRPPHRRRRRLRPPVRPPL) are disordered. Residues 26–43 (PNAAPAHRPAPRPALGRC) are compositionally biased toward low complexity. The span at 44-55 (RPPHRRRRRLRP) shows a compositional bias: basic residues. S-adenosyl-L-methionine is bound by residues R119, G142, D168, 224 to 225 (DL), and E259.

This sequence belongs to the methyltransferase superfamily. LCMT family.

It carries out the reaction [phosphatase 2A protein]-C-terminal L-leucine + S-adenosyl-L-methionine = [phosphatase 2A protein]-C-terminal L-leucine methyl ester + S-adenosyl-L-homocysteine. Functionally, methylates the carboxyl group of the C-terminal leucine residue of protein phosphatase 2A catalytic subunits to form alpha-leucine ester residues. This is Leucine carboxyl methyltransferase 1 (PPM1) from Cryptococcus neoformans var. neoformans serotype D (strain B-3501A) (Filobasidiella neoformans).